The chain runs to 131 residues: Conotoxin Cal8.1 (131 aa).

The signal sequence occupies residues 1–19 (MKLLLTLLLGSALMCITLA). The propeptide occupies 20-38 (DECGLGTHRPVKEVIDNVR).

Post-translationally, contains 4 disulfide bonds. Expressed by the venom duct.

Its subcellular location is the secreted. Its function is as follows. Probable neurotoxin with unknown target. Possibly targets ion channels. This Californiconus californicus (California cone) protein is Conotoxin Cal8.1.